Reading from the N-terminus, the 602-residue chain is Elongation factor 4 (602 aa).

Residues 7 to 196 (SKIRNFCIIA…HPQNEIKSPT (190 aa)) enclose the tr-type G domain. Residues 19 to 24 (DHGKST) and 136 to 139 (NKVD) contribute to the GTP site.

This sequence belongs to the TRAFAC class translation factor GTPase superfamily. Classic translation factor GTPase family. LepA subfamily.

It localises to the cell inner membrane. It catalyses the reaction GTP + H2O = GDP + phosphate + H(+). Its function is as follows. Required for accurate and efficient protein synthesis under certain stress conditions. May act as a fidelity factor of the translation reaction, by catalyzing a one-codon backward translocation of tRNAs on improperly translocated ribosomes. Back-translocation proceeds from a post-translocation (POST) complex to a pre-translocation (PRE) complex, thus giving elongation factor G a second chance to translocate the tRNAs correctly. Binds to ribosomes in a GTP-dependent manner. This Prochlorococcus marinus (strain MIT 9515) protein is Elongation factor 4.